A 44-amino-acid polypeptide reads, in one-letter code: MADKPDFGEVASFDKSKLKKTDTEVKNTLPTKETIDQEKKAESS.

Belongs to the thymosin beta family.

It is found in the cytoplasm. The protein resides in the cytoskeleton. Plays an important role in the organization of the cytoskeleton. Binds to and sequesters actin monomers (G actin) and therefore inhibits actin polymerization. The polypeptide is Thymosin beta-10 (Torpedo marmorata (Marbled electric ray)).